The sequence spans 688 residues: MYYRARHSLPYQKRMENLTWRMMYINNKSIFTNTNNAPKEIFEQSLDPEIDDFDYVAHIKKIGQFNQQKTQQQQDHLQSNLDNHNSIFADNTGFSNNNDRGSSGGGMTSISSLSKKRPAPFSPMIQPEKTTIIPTATNTMSQLSQQLNEFNKFNHPSQTSNFNDVNHHMEISTSHIAPTSSAFEFSLDPLAFEGPNQNFQPEPHHDFNTNSFDSMTSSYERPLFDDFLPRDHHNIQSSSVPTSASSFSTIVPKNTQFSTSASITSPTSTFSNQGNNSSNFHRLNSTVSITATPGNLLRQESMVSLPDYANHLRSMSQTPTMNSSNAPFSHSFNDGGSYFMNNFTGITLPSQPSPQPIHFDNKPKDDHFNTSLSVSQQQPSAKKSKRKSTITKSKKKAASPETTITSTGSTITTKSTNSNSTGKGTATGPAASNTGVSCTNCGTKTTPLWRRNPQGQPLCNACGLFLKLHGVVRPLSLKTDVIKKRQRGNNNGSGNSSGTTNNSNNYNNKSISKKNEIDDGDDLNPTSITNNTGLTNNNNSKSPAKSKKKSNFDNNSNSALNNLDKSKLKINTNEITNISETTSNSSSPVINLNHGGRSSGVFGNTPDYLNGITSPAVSLVKSEIDNPHQLNNSNSNGMLMTMHQSSHQSSLSTTFDHEVESNNEGSNSSGVNTSTANNQDWDWLNMNY.

Disordered stretches follow at residues 83-125, 259-278, 343-438, 482-565, and 639-678; these read NHNS…SPMI, TSAS…NNSS, FTGI…GVSC, IKKR…NLDK, and LMTM…TANN. The span at 259–271 shows a compositional bias: low complexity; that stretch reads TSASITSPTSTFS. Residues 359 to 368 show a composition bias toward basic and acidic residues; sequence FDNKPKDDHF. Polar residues predominate over residues 369–379; the sequence is NTSLSVSQQQP. Residues 382 to 397 are compositionally biased toward basic residues; it reads KKSKRKSTITKSKKKA. Over residues 402 to 428 the composition is skewed to low complexity; it reads TTITSTGSTITTKSTNSNSTGKGTATG. A GATA-type zinc finger spans residues 438–462; sequence CTNCGTKTTPLWRRNPQGQPLCNAC. 5 stretches are compositionally biased toward low complexity: residues 488-510, 529-543, 552-565, 639-654, and 662-678; these read GNNN…NNKS, TNNT…SKSP, FDNN…NLDK, LMTM…LSTT, and NNEG…TANN.

The protein localises to the nucleus. Its function is as follows. Transcriptional regulator of nitrogen utilization required for nitrogen catabolite repression and utilization of isoleucine, tyrosine and tryptophan as nitrogen sources. Controls expression of the MEP2 ammonium permease, the DUR1,2 urea amidolyase, and the transcription factor STP1, which in turn mediates SAP2 expression, a long-known virulence attribute of C.albicans. Influences the filamentation process depending upon the nitrogen sources available. Required for virulence in a mouse systemic infection model. In Candida albicans (strain SC5314 / ATCC MYA-2876) (Yeast), this protein is Transcriptional regulatory protein GAT1 (GAT1).